A 637-amino-acid chain; its full sequence is Chaperone protein HtpG (637 aa).

The tract at residues 1–345 is a; substrate-binding; the sequence is MSQQETHGFQ…SNDLPLNVSR (345 aa). Residues 346–562 are b; the sequence is EILQDNQVTT…EGEMSTQMIK (217 aa). Positions 563–637 are c; sequence LMQAAGQPVP…TNQMLLASVK (75 aa).

This sequence belongs to the heat shock protein 90 family. As to quaternary structure, homodimer.

It localises to the cytoplasm. Its function is as follows. Molecular chaperone. Has ATPase activity. The polypeptide is Chaperone protein HtpG (Shewanella frigidimarina (strain NCIMB 400)).